Here is a 511-residue protein sequence, read N- to C-terminus: Ribose import ATP-binding protein RbsA (511 aa).

2 consecutive ABC transporter domains span residues 13–249 (VSMD…VGRA) and 260–503 (ALGE…AGIA). 45–52 (GENGAGKS) provides a ligand contact to ATP.

This sequence belongs to the ABC transporter superfamily. Ribose importer (TC 3.A.1.2.1) family. In terms of assembly, the complex is composed of an ATP-binding protein (RbsA), two transmembrane proteins (RbsC) and a solute-binding protein (RbsB).

Its subcellular location is the cell inner membrane. It catalyses the reaction D-ribose(out) + ATP + H2O = D-ribose(in) + ADP + phosphate + H(+). Functionally, part of the ABC transporter complex RbsABC involved in ribose import. Responsible for energy coupling to the transport system. This is Ribose import ATP-binding protein RbsA from Roseobacter denitrificans (strain ATCC 33942 / OCh 114) (Erythrobacter sp. (strain OCh 114)).